We begin with the raw amino-acid sequence, 236 residues long: Ribose-5-phosphate isomerase A (236 aa).

Residues 33–36, 90–93, and 103–106 contribute to the substrate site; these read TGST, DGAD, and KGGG. Glu-112 acts as the Proton acceptor in catalysis. Substrate is bound at residue Lys-130.

Belongs to the ribose 5-phosphate isomerase family. Homodimer.

It catalyses the reaction aldehydo-D-ribose 5-phosphate = D-ribulose 5-phosphate. It functions in the pathway carbohydrate degradation; pentose phosphate pathway; D-ribose 5-phosphate from D-ribulose 5-phosphate (non-oxidative stage): step 1/1. Its function is as follows. Catalyzes the reversible conversion of ribose-5-phosphate to ribulose 5-phosphate. The sequence is that of Ribose-5-phosphate isomerase A from Nostoc sp. (strain PCC 7120 / SAG 25.82 / UTEX 2576).